Consider the following 355-residue polypeptide: Methylthioribose-1-phosphate isomerase (355 aa).

Substrate-binding positions include 47-49 (RGA), arginine 91, and glutamine 199. Catalysis depends on aspartate 240, which acts as the Proton donor. Position 250–251 (250–251 (NK)) interacts with substrate.

Belongs to the eIF-2B alpha/beta/delta subunits family. MtnA subfamily.

It catalyses the reaction 5-(methylsulfanyl)-alpha-D-ribose 1-phosphate = 5-(methylsulfanyl)-D-ribulose 1-phosphate. The protein operates within amino-acid biosynthesis; L-methionine biosynthesis via salvage pathway; L-methionine from S-methyl-5-thio-alpha-D-ribose 1-phosphate: step 1/6. Its function is as follows. Catalyzes the interconversion of methylthioribose-1-phosphate (MTR-1-P) into methylthioribulose-1-phosphate (MTRu-1-P). The sequence is that of Methylthioribose-1-phosphate isomerase from Oleidesulfovibrio alaskensis (strain ATCC BAA-1058 / DSM 17464 / G20) (Desulfovibrio alaskensis).